A 566-amino-acid chain; its full sequence is Arginine--tRNA ligase (566 aa).

The 'HIGH' region motif lies at 129–139 (ANPTGPLHIGH).

This sequence belongs to the class-I aminoacyl-tRNA synthetase family. Monomer.

It localises to the cytoplasm. The catalysed reaction is tRNA(Arg) + L-arginine + ATP = L-arginyl-tRNA(Arg) + AMP + diphosphate. In Wolbachia pipientis subsp. Culex pipiens (strain wPip), this protein is Arginine--tRNA ligase.